A 3323-amino-acid chain; its full sequence is Mucin-3A (3323 aa).

A signal peptide spans 1–15 (MQLLGLLGLLWMLKA). Disordered regions lie at residues 218–243 (TISS…TSPT), 270–289 (TSMT…SSPT), 325–345 (ISRS…STVT), 359–380 (GTLS…TETA), 539–677 (MSAS…PSTE), 700–722 (NASS…GTNS), 734–756 (ETSS…KTAK), 909–991 (SFSS…TLTP), 1170–1201 (ISSA…TTPT), 1318–1356 (AESA…FPSS), 1380–1442 (AMTS…TNPV), 1484–1509 (TMTE…ETAK), 1714–1746 (TPSS…TPTS), 1793–1844 (FTSS…YPTS), and 1900–2056 (TSHS…SHST). The span at 270 to 284 (TSMTTTASQPTATNT) shows a compositional bias: low complexity. The span at 545–563 (GTTHTESISSPPASTSTLH) shows a compositional bias: polar residues. Low complexity predominate over residues 564–618 (TTAESTLAPTTTTSFTTSTTMEPPSTTAATTGTGQTTFTSSTATFPETTTPTPTT). A compositionally biased stretch (polar residues) spans 619 to 629 (DMSTESLTTAM). The span at 630–676 (TSPPITSSVTSTNTVTSMTTTTSPPTTTNSFTSLTSMPLSSTPVPST) shows a compositional bias: low complexity. Residues 700–721 (NASSMTTSETTYPNSPTGPGTN) are compositionally biased toward polar residues. Positions 909–918 (SFSSSMSESS) are enriched in low complexity. The span at 919-932 (AGTTHTESISSPRG) shows a compositional bias: polar residues. Over residues 933–991 (TTSTLHTTVESTPSPTTTTSFTTSTMMEPPSSTVSTTGRGQTTFPSSTATFPETTTLTP) the composition is skewed to low complexity. The segment covering 1324 to 1356 (PTTTTSFTTSPTMEPPSTTVATTGTGQTTFPSS) has biased composition (low complexity). Repeat copies occupy residues 1893-1910 (VTTT…FTSS), 1911-1927 (IATT…FTSS), 1928-1944 (ITTT…FTSS), 1945-1961 (ITNT…FTSS), 1962-1978 (ITTT…LTSS), 1979-1995 (ITTT…YTSL), 1996-2012 (ITTT…FTSS), 2013-2029 (ITTT…LTSS), 2030-2046 (ITTT…FTSS), 2047-2062 (ITTE…FTSL), 2063-2079 (ITIT…YTTS), 2080-2096 (ITTT…FTSS), 2097-2113 (ITTT…FTSS), 2114-2130 (ITTS…FTSS), 2131-2147 (ITTT…FTSS), 2148-2164 (ITTT…FTSL), 2165-2191 (ITTT…FTSS), 2192-2208 (NTIT…YITS), 2209-2225 (ITTT…FSSS), 2226-2242 (ITTT…FTSS), 2243-2259 (ITTT…FTSS), 2260-2276 (ITTT…FTSS), 2277-2293 (ITTS…STSL), 2294-2310 (ITTT…FTSS), 2311-2327 (ITTT…FTSS), 2328-2344 (ITTT…FTSS), 2345-2361 (ITTT…FTSS), 2362-2378 (ITTT…FSSS), 2379-2395 (ITTT…LTSW), 2396-2412 (VTTT…LTSS), 2413-2429 (ITTT…FTSS), and 2430-2446 (ITTT…LSSS). The 32 X approximate tandem repeats, Ser/Thr-rich stretch occupies residues 1893–2446 (VTTTTKITSH…SESTPSLSSS (554 aa)). The segment covering 1907-1947 (FTSSIATTETPSHSTPRFTSSITTTETPSHSTPRFTSSITN) has biased composition (polar residues). Residues 1948-2056 (TKTTSHSSPS…ITTETTSHST (109 aa)) are compositionally biased toward low complexity. Composition is skewed to low complexity over residues 2100–2170 (TETT…TTET), 2177–2384 (TTET…TTET), 2393–2447 (TSWV…SSST), and 2464–2507 (TTSE…TTTT). 6 disordered regions span residues 2100 to 2447 (TETT…SSST), 2464 to 2508 (TTSE…TTTD), 2578 to 2608 (TQTP…DSST), 2631 to 2656 (IPST…TSTS), 2834 to 2858 (MMPE…VPTN), and 2897 to 2937 (SSLP…TSRR). The span at 2578–2602 (TQTPPVLTSATGTQTSPAPTTVTFG) shows a compositional bias: polar residues. Low complexity-rich tracts occupy residues 2633–2656 (STHS…TSTS), 2834–2849 (MMPE…ASSS), and 2905–2937 (TSSK…TSRR). Positions 2976–3009 (SGDRCQLQTRCQNGGQWDGLKCQCPSTFYGSSCE) constitute an EGF-like domain. 2 disulfide bridges follow: cysteine 2980-cysteine 2986 and cysteine 2999-cysteine 3008. The 126-residue stretch at 3018 to 3143 (DVVETEVGME…DSIKVNNNSK (126 aa)) folds into the SEA domain. A helical transmembrane segment spans residues 3227 to 3247 (LVGGLTAGAALLVLLLLALGV).

Highly O-glycosylated and probably also N-glycosylated. As to expression, broad specificity; small intestine, colon, colonic tumors, heart, liver, thymus, prostate, pancreas and gall bladder.

Its subcellular location is the membrane. It is found in the secreted. In terms of biological role, major glycoprotein component of a variety of mucus gels. Thought to provide a protective, lubricating barrier against particles and infectious agents at mucosal surfaces. May be involved in ligand binding and intracellular signaling. The polypeptide is Mucin-3A (Homo sapiens (Human)).